The chain runs to 345 residues: N-acetyl-gamma-glutamyl-phosphate reductase (345 aa).

Cys-149 is an active-site residue.

The protein belongs to the NAGSA dehydrogenase family. Type 1 subfamily.

The protein localises to the cytoplasm. The enzyme catalyses N-acetyl-L-glutamate 5-semialdehyde + phosphate + NADP(+) = N-acetyl-L-glutamyl 5-phosphate + NADPH + H(+). It participates in amino-acid biosynthesis; L-arginine biosynthesis; N(2)-acetyl-L-ornithine from L-glutamate: step 3/4. Catalyzes the NADPH-dependent reduction of N-acetyl-5-glutamyl phosphate to yield N-acetyl-L-glutamate 5-semialdehyde. The sequence is that of N-acetyl-gamma-glutamyl-phosphate reductase from Bacillus cytotoxicus (strain DSM 22905 / CIP 110041 / 391-98 / NVH 391-98).